The primary structure comprises 297 residues: Nucleotide-binding protein BMA10229_A1510 (297 aa).

8 to 15 (GISGSGKS) lines the ATP pocket. 57 to 60 (DARS) serves as a coordination point for GTP.

The protein belongs to the RapZ-like family.

In terms of biological role, displays ATPase and GTPase activities. In Burkholderia mallei (strain NCTC 10229), this protein is Nucleotide-binding protein BMA10229_A1510.